A 428-amino-acid polypeptide reads, in one-letter code: Flotillin-2a (428 aa).

Residues cysteine 4, cysteine 19, and cysteine 20 are each lipidated (S-palmitoyl cysteine).

This sequence belongs to the band 7/mec-2 family. Flotillin subfamily. Heterooligomer; Heterooligomerizes with ic complex of flotillins 1 and 2. Post-translationally, palmitoylation may be required for the formation of higher order complexes and for neurite outgrowth in cultured neural stem cells.

It localises to the membrane. The protein localises to the endosome. May play a role in axon growth and regeneration. May be involved in epidermal cell adhesion and epidermal structure and function. The protein is Flotillin-2a (flot2a) of Danio rerio (Zebrafish).